We begin with the raw amino-acid sequence, 307 residues long: Cyclin-dependent kinase 5 activator 1 (307 aa).

A Phosphoserine; by CDK5 modification is found at S8. The interval 96–136 is disordered; that stretch reads STFAQPPPAQPPAPPANQLSGSQTGVSSSVKKAPHPSVTSA. A compositionally biased stretch (pro residues) spans 100 to 110; it reads QPPPAQPPAPP. Positions 112-125 are enriched in polar residues; it reads NQLSGSQTGVSSSV. Position 138 is a phosphothreonine; by CDK5 (T138).

Belongs to the cyclin-dependent kinase 5 activator family. As to quaternary structure, heterodimer composed of a catalytic subunit CDK5 and a regulatory subunit CDK5R1 (p25) and macromolecular complex composed of at least CDK5, CDK5R1 (p35) and CDK5RAP1 or CDK5RAP2 or CDK5RAP3. Only the heterodimer shows kinase activity. Interacts with EPHA4 and NGEF; may mediate the activation of NGEF by EPHA4. Interacts with RASGRF2. The complex p35/CDK5 interacts with CLOCK. The p35 form is proteolytically cleaved by calpain, giving rise to the p25 form. P35 has a 5 to 10 fold shorter half-life compared to p25. The conversion results in deregulation of the CDK5 kinase: p25/CDK5 kinase displays an increased and altered tau phosphorylation in comparison to the p35/CDK5 kinase in vivo. Post-translationally, myristoylated. A proper myristoylation signal is essential for the proper distribution of p35. In terms of processing, phosphorylation at Ser-8 and Thr-138 by CDK5 prevents calpain-mediated proteolysis. Ubiquitinated, leading to its degradation: degradation of p35 by proteasome results in down-regulation of CDK5 activity. During this process, CDK5 phosphorylates p35 and induces its ubiquitination and subsequent degradation. Ubiquitinated by the CRL2(FEM1B) complex, which recognizes the -Gly-Leu-Asp-Arg C-degron at the C-terminus, leading to its degradation. In terms of tissue distribution, brain and neuron specific.

Its subcellular location is the cell membrane. It localises to the cell projection. The protein resides in the neuron projection. The protein localises to the nucleus. It is found in the cytoplasm. Its subcellular location is the perinuclear region. It localises to the perikaryon. Its function is as follows. p35 is a neuron specific activator of CDK5. The complex p35/CDK5 is required for neurite outgrowth and cortical lamination. Involved in dendritic spine morphogenesis by mediating the EFNA1-EPHA4 signaling. Activator of TPKII. The complex p35/CDK5 participates in the regulation of the circadian clock by modulating the function of CLOCK protein: phosphorylates CLOCK at 'Thr-451' and 'Thr-461' and regulates the transcriptional activity of the CLOCK-BMAL1 heterodimer in association with altered stability and subcellular distribution. In Spermophilus citellus (European ground squirrel), this protein is Cyclin-dependent kinase 5 activator 1 (CDK5R1).